Reading from the N-terminus, the 233-residue chain is Riboflavin kinase (233 aa).

The segment at Met-1–Glu-99 is unknown. A riboflavin kinase region spans residues Leu-100–Ala-233. A CDP-binding site is contributed by Gly-109 to Arg-114. Mg(2+)-binding residues include Thr-138 and Asn-140. The FMN site is built by Thr-200 and Glu-208. CDP is bound at residue Val-213–Arg-216.

The protein belongs to the archaeal riboflavin kinase family. It depends on Mg(2+) as a cofactor.

The enzyme catalyses riboflavin + CTP = CDP + FMN + H(+). It functions in the pathway cofactor biosynthesis; FMN biosynthesis; FMN from riboflavin (CTP route): step 1/1. In terms of biological role, catalyzes the CTP-dependent phosphorylation of riboflavin (vitamin B2) to form flavin mononucleotide (FMN). The polypeptide is Riboflavin kinase (ribK) (Halobacterium salinarum (strain ATCC 700922 / JCM 11081 / NRC-1) (Halobacterium halobium)).